The following is a 364-amino-acid chain: MIIDTTEVQAINSFSRSESSKEFYGLIWLLVPIFTPVSGILIGVLVIVWLEREISAGIQQRIGPEYAGPLGILQALADGTKLLFKEDLLPSRGDIRLFSVGPSIAVISILLSYSVIPFGYRLIIADISIGVFLWIAISSIAPIGLLMSGYGSNNKYSFSGGLRAAAQSISYEIPLTPCVLSISLRLSNSSSTVDIVEAQSKYGFCGWNLWRQPIGFIVFLISSLAECERLPFDLPEAEEELVAGYQTEYSGIKSGLFYVASYLNLLVSSLFVTVLYLGGWNLSIPYISIPELFGINKTGGVFGSTIGILITLAKAYLFLFVPITTRWTLPRMRMDQLLNLGWKFLLPIALGNLLLTTSSQLLSF.

6 helical membrane passes run 27–47 (IWLL…VLVI), 98–118 (FSVG…VIPF), 127–147 (ISIG…GLLM), 255–275 (GLFY…VTVL), 301–321 (VFGS…FLFV), and 337–357 (LLNL…LLTT).

This sequence belongs to the complex I subunit 1 family. NDH is composed of at least 16 different subunits, 5 of which are encoded in the nucleus.

The protein resides in the plastid. It localises to the chloroplast thylakoid membrane. It carries out the reaction a plastoquinone + NADH + (n+1) H(+)(in) = a plastoquinol + NAD(+) + n H(+)(out). It catalyses the reaction a plastoquinone + NADPH + (n+1) H(+)(in) = a plastoquinol + NADP(+) + n H(+)(out). Functionally, NDH shuttles electrons from NAD(P)H:plastoquinone, via FMN and iron-sulfur (Fe-S) centers, to quinones in the photosynthetic chain and possibly in a chloroplast respiratory chain. The immediate electron acceptor for the enzyme in this species is believed to be plastoquinone. Couples the redox reaction to proton translocation, and thus conserves the redox energy in a proton gradient. This Illicium oligandrum (Star anise) protein is NAD(P)H-quinone oxidoreductase subunit 1, chloroplastic.